The chain runs to 474 residues: Glutamate--tRNA ligase (474 aa).

The short motif at 9 to 19 is the 'HIGH' region element; it reads PSPTGYLHVGG. The 'KMSKS' region signature appears at 240–244; that stretch reads KLSKR. An ATP-binding site is contributed by lysine 243.

This sequence belongs to the class-I aminoacyl-tRNA synthetase family. Glutamate--tRNA ligase type 1 subfamily. In terms of assembly, monomer.

It localises to the cytoplasm. It carries out the reaction tRNA(Glu) + L-glutamate + ATP = L-glutamyl-tRNA(Glu) + AMP + diphosphate. Catalyzes the attachment of glutamate to tRNA(Glu) in a two-step reaction: glutamate is first activated by ATP to form Glu-AMP and then transferred to the acceptor end of tRNA(Glu). This chain is Glutamate--tRNA ligase, found in Vibrio vulnificus (strain YJ016).